Reading from the N-terminus, the 464-residue chain is Siroheme synthase (464 aa).

Residues 1–203 (MEFLPLFHNL…GQGDEAERLL (203 aa)) are precorrin-2 dehydrogenase /sirohydrochlorin ferrochelatase. NAD(+) contacts are provided by residues 22–23 (EI) and 43–44 (PQ). Ser128 is subject to Phosphoserine. The uroporphyrinogen-III C-methyltransferase stretch occupies residues 216–464 (GEVYLVGAGP…KWFEGAQSQV (249 aa)). An S-adenosyl-L-methionine-binding site is contributed by Pro225. Asp248 (proton acceptor) is an active-site residue. The active-site Proton donor is the Lys270. S-adenosyl-L-methionine-binding positions include 301 to 303 (GGD), Ile306, 331 to 332 (TA), Met383, and Gly412.

It in the N-terminal section; belongs to the precorrin-2 dehydrogenase / sirohydrochlorin ferrochelatase family. In the C-terminal section; belongs to the precorrin methyltransferase family.

It catalyses the reaction uroporphyrinogen III + 2 S-adenosyl-L-methionine = precorrin-2 + 2 S-adenosyl-L-homocysteine + H(+). The enzyme catalyses precorrin-2 + NAD(+) = sirohydrochlorin + NADH + 2 H(+). It carries out the reaction siroheme + 2 H(+) = sirohydrochlorin + Fe(2+). Its pathway is cofactor biosynthesis; adenosylcobalamin biosynthesis; precorrin-2 from uroporphyrinogen III: step 1/1. It functions in the pathway cofactor biosynthesis; adenosylcobalamin biosynthesis; sirohydrochlorin from precorrin-2: step 1/1. The protein operates within porphyrin-containing compound metabolism; siroheme biosynthesis; precorrin-2 from uroporphyrinogen III: step 1/1. It participates in porphyrin-containing compound metabolism; siroheme biosynthesis; siroheme from sirohydrochlorin: step 1/1. Its pathway is porphyrin-containing compound metabolism; siroheme biosynthesis; sirohydrochlorin from precorrin-2: step 1/1. Its function is as follows. Multifunctional enzyme that catalyzes the SAM-dependent methylations of uroporphyrinogen III at position C-2 and C-7 to form precorrin-2 via precorrin-1. Then it catalyzes the NAD-dependent ring dehydrogenation of precorrin-2 to yield sirohydrochlorin. Finally, it catalyzes the ferrochelation of sirohydrochlorin to yield siroheme. In Pseudomonas fluorescens (strain SBW25), this protein is Siroheme synthase.